We begin with the raw amino-acid sequence, 149 residues long: Calmodulin (149 aa).

The residue at position 2 (alanine 2) is an N-acetylalanine. EF-hand domains are found at residues 8-43 (EQIS…LGQN), 44-79 (PTEA…KLKD), 81-116 (DTEE…LGEK), and 117-149 (LTNE…MIAK). Ca(2+) contacts are provided by aspartate 21, aspartate 23, aspartate 25, threonine 27, glutamate 32, aspartate 57, aspartate 59, asparagine 61, threonine 63, glutamate 68, aspartate 94, aspartate 96, aspartate 98, tyrosine 100, glutamate 105, aspartate 130, aspartate 132, aspartate 134, glutamine 136, and glutamate 141.

Belongs to the calmodulin family.

Its subcellular location is the cytoplasm. Its function is as follows. Calmodulin mediates the control of a large number of enzymes, ion channels and other proteins by Ca(2+). Among the enzymes to be stimulated by the calmodulin-Ca(2+) complex are a number of protein kinases and phosphatases. The chain is Calmodulin from Plasmodium falciparum (isolate 3D7).